Here is a 77-residue protein sequence, read N- to C-terminus: MSTIEERVKKVVAERLNVKEEDIQNTSSFTEDLGADSLDTVELVMALEEEFDTEIPDEEAEKITTVQEAIDYVVAHQ.

One can recognise a Carrier domain in the interval 2–77 (STIEERVKKV…EAIDYVVAHQ (76 aa)). Residue S37 is modified to O-(pantetheine 4'-phosphoryl)serine.

It belongs to the acyl carrier protein (ACP) family. Post-translationally, 4'-phosphopantetheine is transferred from CoA to a specific serine of apo-ACP by AcpS. This modification is essential for activity because fatty acids are bound in thioester linkage to the sulfhydryl of the prosthetic group.

It is found in the cytoplasm. It functions in the pathway lipid metabolism; fatty acid biosynthesis. In terms of biological role, carrier of the growing fatty acid chain in fatty acid biosynthesis. This is Acyl carrier protein from Chromohalobacter salexigens (strain ATCC BAA-138 / DSM 3043 / CIP 106854 / NCIMB 13768 / 1H11).